A 401-amino-acid chain; its full sequence is Heparan-sulfate 6-O-sulfotransferase 1 (401 aa).

Topologically, residues 1-4 (MVER) are cytoplasmic. The chain crosses the membrane as a helical; Signal-anchor for type II membrane protein span at residues 5 to 27 (ASKFVLVVAGSACFMLILYQYAG). Residues 28-401 (PGLSLGAPGG…DYMSHIIEKW (374 aa)) lie on the Lumenal side of the membrane. 83–91 (HIQKTGGTT) is a binding site for 3'-phosphoadenylyl sulfate. Residues 113–114 (KK), arginine 130, tryptophan 135, and histidine 140 contribute to the substrate site. The Proton acceptor role is filled by histidine 140. Residues arginine 175 and serine 183 each coordinate 3'-phosphoadenylyl sulfate. Positions 187 and 194 each coordinate substrate. Asparagine 254 is a glycosylation site (N-linked (GlcNAc...) asparagine). 307-309 (MQY) is a 3'-phosphoadenylyl sulfate binding site. Residue asparagine 310 is glycosylated (N-linked (GlcNAc...) asparagine). 313–314 (RA) contacts 3'-phosphoadenylyl sulfate. Residues 367–389 (ERLLHRSKEALPREDTEEPGRVP) form a disordered region.

It belongs to the sulfotransferase 6 family. In terms of processing, N-glycosylated.

Its subcellular location is the membrane. It catalyses the reaction alpha-D-glucosaminyl-[heparan sulfate](n) + 3'-phosphoadenylyl sulfate = 6-sulfo-alpha-D-glucosaminyl-[heparan sulfate](n) + adenosine 3',5'-bisphosphate + H(+). Its activity is regulated as follows. Inhibited by dithiothreitol and stimulated by protamine. Its function is as follows. 6-O-sulfation enzyme which catalyzes the transfer of sulfate from 3'-phosphoadenosine 5'-phosphosulfate (PAPS) to position 6 of the N-sulfoglucosamine residue (GlcNS) of heparan sulfate. Also transfers sulfate to CDSNS-heparin and performs the crucial step modification in the biosynthesis of anticoagulant heparan sulfate (HSact). Critical for normal neuronal development where it may play a role in neuron branching. May also play a role in limb development. May prefer iduronic acid. This is Heparan-sulfate 6-O-sulfotransferase 1 from Cricetulus griseus (Chinese hamster).